Here is a 270-residue protein sequence, read N- to C-terminus: tRNA pseudouridine synthase A (270 aa).

Residue D60 is the Nucleophile of the active site. Residues 107–111 are RNA binding; sequence FHARF. Position 118 (Y118) interacts with substrate. The interval 168–172 is interaction with tRNA; the sequence is QCQSR.

It belongs to the tRNA pseudouridine synthase TruA family. Homodimer.

The catalysed reaction is uridine(38/39/40) in tRNA = pseudouridine(38/39/40) in tRNA. Functionally, formation of pseudouridine at positions 38, 39 and 40 in the anticodon stem and loop of transfer RNAs. The chain is tRNA pseudouridine synthase A from Escherichia coli O9:H4 (strain HS).